A 545-amino-acid chain; its full sequence is ATP synthase subunit alpha (545 aa).

ATP is bound at residue 173–180; sequence GDRQTGKT.

Belongs to the ATPase alpha/beta chains family. In terms of assembly, F-type ATPases have 2 components, CF(1) - the catalytic core - and CF(0) - the membrane proton channel. CF(1) has five subunits: alpha(3), beta(3), gamma(1), delta(1), epsilon(1). CF(0) has three main subunits: a(1), b(2) and c(9-12). The alpha and beta chains form an alternating ring which encloses part of the gamma chain. CF(1) is attached to CF(0) by a central stalk formed by the gamma and epsilon chains, while a peripheral stalk is formed by the delta and b chains.

It is found in the cell membrane. It catalyses the reaction ATP + H2O + 4 H(+)(in) = ADP + phosphate + 5 H(+)(out). Functionally, produces ATP from ADP in the presence of a proton gradient across the membrane. The alpha chain is a regulatory subunit. The polypeptide is ATP synthase subunit alpha (Clavibacter sepedonicus (Clavibacter michiganensis subsp. sepedonicus)).